A 222-amino-acid polypeptide reads, in one-letter code: Glutathione S-transferase A4 (222 aa).

Residue Met-1 is modified to N-acetylmethionine. In terms of domain architecture, GST N-terminal spans 3 to 83; it reads ARPKLHYPNG…YIADKHNLFG (81 aa). Glutathione contacts are provided by residues Tyr-9, 54–55, and 67–68; these read QV and QT. The region spanning 85 to 208 is the GST C-terminal domain; that stretch reads NLKERTLIDM…EPGSKKKPPP (124 aa). Tyr-212 contributes to the substrate binding site.

It belongs to the GST superfamily. Alpha family. In terms of assembly, homodimer. Expressed at a high level in brain, placenta, and skeletal muscle and much lower in lung and liver.

The protein localises to the cytoplasm. The catalysed reaction is RX + glutathione = an S-substituted glutathione + a halide anion + H(+). Conjugation of reduced glutathione to a wide number of exogenous and endogenous hydrophobic electrophiles. This isozyme has a high catalytic efficiency with 4-hydroxyalkenals such as 4-hydroxynonenal (4-HNE). The protein is Glutathione S-transferase A4 (GSTA4) of Homo sapiens (Human).